The chain runs to 118 residues: UPF0295 protein BA_0538/GBAA_0538/BAS0506 (118 aa).

Helical transmembrane passes span 12 to 32 (IRTF…LGVF) and 43 to 63 (FMMV…WIGM).

Belongs to the UPF0295 family.

It is found in the cell membrane. In Bacillus anthracis, this protein is UPF0295 protein BA_0538/GBAA_0538/BAS0506.